The primary structure comprises 626 residues: Protein MICRORCHIDIA 2 (626 aa).

Residues 579–626 (MRCEEYIKKENETEQTVKSLEKELEEFKSKCAHLALLVDAKKKEMQQA) are a coiled coil.

This sequence belongs to the MORC ATPase protein family. Homodimer and heterodimer with MORC6. Component of an RNA-directed DNA methylation (RdDM) complex that contains at least MORC6, MORC1/CRT1, MORC2, SWI3D and SUVH9. Binds directly to SUVH9. It depends on Mg(2+) as a cofactor. Mn(2+) is required as a cofactor.

The protein localises to the nucleus. It is found in the endosome. Mediator of defense signaling triggered by distinct classes of R proteins. Required during hypersensitive response (HR) that confers disease resistance to turnip crinkle virus (TCV). Contributes to resistance against Pseudomonas syringae and Hyaloperonospora arabidopsidis, at early stages prior to cytosolic calcium ions Ca(2+) accumulation. Required for pathogen-associated molecular pattern (PAMP)-triggered immunity, basal resistance, non-host resistance and systemic acquired resistance (SAR). Involved in RNA-directed DNA methylation (RdDM) as a component of the RdDM machinery and required for gene silencing. May also be involved in the regulation of chromatin architecture to maintain gene silencing. Exhibits ATPase activity. This chain is Protein MICRORCHIDIA 2, found in Arabidopsis thaliana (Mouse-ear cress).